Reading from the N-terminus, the 162-residue chain is 2-C-methyl-D-erythritol 2,4-cyclodiphosphate synthase (162 aa).

Positions 10 and 12 each coordinate a divalent metal cation. Residues 10 to 12 (DVH) and 36 to 37 (HS) contribute to the 4-CDP-2-C-methyl-D-erythritol 2-phosphate site. Histidine 44 contributes to the a divalent metal cation binding site. Residues 58–60 (DIG), 63–67 (FPDTD), 102–108 (AQAPRMA), 134–137 (TTSE), phenylalanine 141, and arginine 144 each bind 4-CDP-2-C-methyl-D-erythritol 2-phosphate.

It belongs to the IspF family. In terms of assembly, homotrimer. A divalent metal cation serves as cofactor.

It catalyses the reaction 4-CDP-2-C-methyl-D-erythritol 2-phosphate = 2-C-methyl-D-erythritol 2,4-cyclic diphosphate + CMP. The protein operates within isoprenoid biosynthesis; isopentenyl diphosphate biosynthesis via DXP pathway; isopentenyl diphosphate from 1-deoxy-D-xylulose 5-phosphate: step 4/6. In terms of biological role, involved in the biosynthesis of isopentenyl diphosphate (IPP) and dimethylallyl diphosphate (DMAPP), two major building blocks of isoprenoid compounds. Catalyzes the conversion of 4-diphosphocytidyl-2-C-methyl-D-erythritol 2-phosphate (CDP-ME2P) to 2-C-methyl-D-erythritol 2,4-cyclodiphosphate (ME-CPP) with a corresponding release of cytidine 5-monophosphate (CMP). The sequence is that of 2-C-methyl-D-erythritol 2,4-cyclodiphosphate synthase from Chromohalobacter salexigens (strain ATCC BAA-138 / DSM 3043 / CIP 106854 / NCIMB 13768 / 1H11).